We begin with the raw amino-acid sequence, 1385 residues long: DNA-directed RNA polymerase subunit beta'' (1385 aa).

The Zn(2+) site is built by Cys224, Cys294, Cys301, and Cys304.

The protein belongs to the RNA polymerase beta' chain family. RpoC2 subfamily. In terms of assembly, in plastids the minimal PEP RNA polymerase catalytic core is composed of four subunits: alpha, beta, beta', and beta''. When a (nuclear-encoded) sigma factor is associated with the core the holoenzyme is formed, which can initiate transcription. The cofactor is Zn(2+).

The protein resides in the plastid. The protein localises to the chloroplast. It carries out the reaction RNA(n) + a ribonucleoside 5'-triphosphate = RNA(n+1) + diphosphate. In terms of biological role, DNA-dependent RNA polymerase catalyzes the transcription of DNA into RNA using the four ribonucleoside triphosphates as substrates. The polypeptide is DNA-directed RNA polymerase subunit beta'' (Illicium oligandrum (Star anise)).